Consider the following 179-residue polypeptide: Large ribosomal subunit protein uL5 (179 aa).

The protein belongs to the universal ribosomal protein uL5 family. In terms of assembly, part of the 50S ribosomal subunit; part of the 5S rRNA/L5/L18/L25 subcomplex. Contacts the 5S rRNA and the P site tRNA. Forms a bridge to the 30S subunit in the 70S ribosome.

In terms of biological role, this is one of the proteins that bind and probably mediate the attachment of the 5S RNA into the large ribosomal subunit, where it forms part of the central protuberance. In the 70S ribosome it contacts protein S13 of the 30S subunit (bridge B1b), connecting the 2 subunits; this bridge is implicated in subunit movement. Contacts the P site tRNA; the 5S rRNA and some of its associated proteins might help stabilize positioning of ribosome-bound tRNAs. This chain is Large ribosomal subunit protein uL5, found in Stutzerimonas stutzeri (strain A1501) (Pseudomonas stutzeri).